Consider the following 353-residue polypeptide: MATAAMTKVFVLLFLVAACYLPAHAAAAECDCATDTAGRDKAQALRLKVIAIFCILAGSTVGAALPSLGGRFPAIQPETDVFLSVKAFAGGVILATGLVHILPAAFEALSSPCLVGGPWKRFPFAGMVAMVSAIGTLIVDTVATGYFHRTDAKRKAAAVADEPADDLEASDEHSHGHAHGMSVMSVAPAGEEDLVRHRVISQVLELGVVVHSLIIGMSLGASDFPSTVRPLVPALTFHQFFEGIGLGGCIVQAKFRVRSVVTMALFFSLTTPAGIVVGIGISSVYDANSPTALVVQGLLEAAAAGILVYMALVDILAEDFMKTKVQRRGRLQLAMNVALLLGAGLMSMIAIWA.

A signal peptide spans 1 to 27 (MATAAMTKVFVLLFLVAACYLPAHAAA). Residues 28–48 (AECDCATDTAGRDKAQALRLK) lie on the Extracellular side of the membrane. The helical transmembrane segment at 49 to 69 (VIAIFCILAGSTVGAALPSLG) threads the bilayer. Over 70 to 86 (GRFPAIQPETDVFLSVK) the chain is Cytoplasmic. A helical membrane pass occupies residues 87–107 (AFAGGVILATGLVHILPAAFE). Topologically, residues 108 to 121 (ALSSPCLVGGPWKR) are extracellular. Residues 122-142 (FPFAGMVAMVSAIGTLIVDTV) traverse the membrane as a helical segment. Residues 143-198 (ATGYFHRTDAKRKAAAVADEPADDLEASDEHSHGHAHGMSVMSVAPAGEEDLVRHR) are Cytoplasmic-facing. A helical membrane pass occupies residues 199–219 (VISQVLELGVVVHSLIIGMSL). Residues 220 to 230 (GASDFPSTVRP) lie on the Extracellular side of the membrane. The helical transmembrane segment at 231–251 (LVPALTFHQFFEGIGLGGCIV) threads the bilayer. The Cytoplasmic segment spans residues 252–260 (QAKFRVRSV). Residues 261–281 (VTMALFFSLTTPAGIVVGIGI) traverse the membrane as a helical segment. At 282-292 (SSVYDANSPTA) the chain is on the extracellular side. Residues 293-313 (LVVQGLLEAAAAGILVYMALV) form a helical membrane-spanning segment. The Cytoplasmic segment spans residues 314 to 332 (DILAEDFMKTKVQRRGRLQ). The helical transmembrane segment at 333-353 (LAMNVALLLGAGLMSMIAIWA) threads the bilayer.

This sequence belongs to the ZIP transporter (TC 2.A.5) family.

Its subcellular location is the cell membrane. In terms of biological role, zinc transporter that mediates zinc uptake from the rhizosphere and may be responsible for the translocation of zinc within the plant. This is Zinc transporter 5 (ZIP5) from Oryza sativa subsp. japonica (Rice).